The sequence spans 312 residues: Ribosomal protein L11 methyltransferase (312 aa).

Positions 160, 181, 203, and 246 each coordinate S-adenosyl-L-methionine.

The protein belongs to the methyltransferase superfamily. PrmA family.

It localises to the cytoplasm. The catalysed reaction is L-lysyl-[protein] + 3 S-adenosyl-L-methionine = N(6),N(6),N(6)-trimethyl-L-lysyl-[protein] + 3 S-adenosyl-L-homocysteine + 3 H(+). Methylates ribosomal protein L11. The sequence is that of Ribosomal protein L11 methyltransferase from Staphylococcus aureus (strain COL).